A 215-amino-acid chain; its full sequence is Small ribosomal subunit protein uS7 (215 aa).

The protein belongs to the universal ribosomal protein uS7 family. As to quaternary structure, part of the 30S ribosomal subunit.

In terms of biological role, one of the primary rRNA binding proteins, it binds directly to 16S rRNA where it nucleates assembly of the head domain of the 30S subunit. Is located at the subunit interface close to the decoding center. The sequence is that of Small ribosomal subunit protein uS7 from Thermococcus kodakarensis (strain ATCC BAA-918 / JCM 12380 / KOD1) (Pyrococcus kodakaraensis (strain KOD1)).